A 702-amino-acid polypeptide reads, in one-letter code: Polyribonucleotide nucleotidyltransferase (702 aa).

Residues aspartate 485 and aspartate 491 each coordinate Mg(2+). The region spanning 552 to 611 (PKTSTLQIDPEKIRDVIGAGGKVINKIIADTGVKIDIKEDGLVYVSSAESEGVKEAVKII) is the KH domain. In terms of domain architecture, S1 motif spans 621–689 (GEIYLGKVTK…SQGRINLSRK (69 aa)).

This sequence belongs to the polyribonucleotide nucleotidyltransferase family. Requires Mg(2+) as cofactor.

It is found in the cytoplasm. The catalysed reaction is RNA(n+1) + phosphate = RNA(n) + a ribonucleoside 5'-diphosphate. In terms of biological role, involved in mRNA degradation. Catalyzes the phosphorolysis of single-stranded polyribonucleotides processively in the 3'- to 5'-direction. The chain is Polyribonucleotide nucleotidyltransferase from Clostridium perfringens (strain SM101 / Type A).